Consider the following 645-residue polypeptide: Cytoplasmic dynein 1 intermediate chain 1 (645 aa).

Composition is skewed to basic and acidic residues over residues 1-13 and 20-58; these read MSDK…ELER and QIRE…KRRE. Disordered regions lie at residues 1–58 and 96–125; these read MSDK…KRRE and MSPS…RTLQ. The residue at position 2 (Ser-2) is an N-acetylserine. The segment at 2 to 123 is interaction with DCTN1; the sequence is SDKSDLKAEL…SGDLGPLTRT (122 aa). Phosphoserine occurs at positions 50 and 100. Low complexity predominate over residues 96-107; sequence MSPSSKSVSTPS. Phosphothreonine is present on Thr-105. Phosphoserine is present on residues Ser-107, Ser-111, and Ser-114. The tract at residues 147 to 163 is interaction with DYNLT1; sequence KLGVSKVTQVDFLPREV. The disordered stretch occupies residues 169 to 221; sequence ETQTPLATHQSEEDEEDEEMVESKVGQDSELENQDKKQEVKEAPPRELTEEEK. Thr-176 carries the post-translational modification Phosphothreonine. 2 positions are modified to phosphoserine: Ser-179 and Ser-197. Positions 189 to 221 are enriched in basic and acidic residues; the sequence is VESKVGQDSELENQDKKQEVKEAPPRELTEEEK. WD repeat units lie at residues 285–334, 338–378, 387–428, 437–477, 482–527, 530–570, and 576–615; these read SKHR…TTPE, HCQS…RTPV, AHTH…TPQE, SKPV…AGIG, GHQG…PLYS, DNAD…EVPT, and EGAS…VPHN. At Ser-635 the chain carries Phosphoserine.

Belongs to the dynein intermediate chain family. As to quaternary structure, homodimer. The cytoplasmic dynein 1 complex consists of two catalytic heavy chains (HCs) and a number of non-catalytic subunits presented by intermediate chains (ICs), light intermediate chains (LICs) and light chains (LCs); the composition seems to vary in respect to the IC, LIC and LC composition. The heavy chain homodimer serves as a scaffold for the probable homodimeric assembly of the respective non-catalytic subunits. The ICs and LICs bind directly to the HC dimer and the LCs assemble on the IC dimer. Interacts with DYNC1H1. Interacts with DYNLT1 and DYNLT3. Interacts with DCTN1. Interacts with MCRS1; the interaction is required for the proper distribution of centriolar satellites.

The protein localises to the cytoplasm. It is found in the chromosome. Its subcellular location is the centromere. The protein resides in the kinetochore. It localises to the cytoskeleton. The protein localises to the spindle pole. Its function is as follows. Acts as one of several non-catalytic accessory components of the cytoplasmic dynein 1 complex that are thought to be involved in linking dynein to cargos and to adapter proteins that regulate dynein function. Cytoplasmic dynein 1 acts as a motor for the intracellular retrograde motility of vesicles and organelles along microtubules. The intermediate chains mediate the binding of dynein to dynactin via its 150 kDa component (p150-glued) DCTN1. May play a role in mediating the interaction of cytoplasmic dynein with membranous organelles and kinetochores. The sequence is that of Cytoplasmic dynein 1 intermediate chain 1 (DYNC1I1) from Homo sapiens (Human).